The chain runs to 196 residues: Pentatricopeptide repeat-containing protein At1g62350 (196 aa).

PPR repeat units lie at residues 70-104 and 105-139; these read DMFF…EVLF and DQHT…PDRP.

This sequence belongs to the PPR family. P subfamily.

In Arabidopsis thaliana (Mouse-ear cress), this protein is Pentatricopeptide repeat-containing protein At1g62350.